The primary structure comprises 634 residues: Calcium up-regulated protein D (634 aa).

Residues 1-23 form a disordered region; sequence MINIEDISKSSNQSEEKQLKSTS. 2 Ricin B-type lectin domains span residues 27 to 146 and 117 to 250; these read KPKY…WTTF and PGNG…WGIN.

It belongs to the cup family.

The protein localises to the cytoplasm. Its subcellular location is the membrane. Its function is as follows. May play an important role in stabilizing and/or regulating the cell membrane during Ca(2+) stress or certain stages of development. The chain is Calcium up-regulated protein D (cupD) from Dictyostelium discoideum (Social amoeba).